Here is a 425-residue protein sequence, read N- to C-terminus: Meiotic recombination protein spo-11 (425 aa).

The tract at residues 1 to 38 (MYEYSFNPNIDHEPGSVESQQSTIYSDSDDSDDSFLDD) is disordered. The region spanning 15 to 158 (GSVESQQSTI…LNILSCGRGI (144 aa)) is the Topo IIA-type catalytic domain. The span at 27 to 38 (DSDDSDDSFLDD) shows a compositional bias: acidic residues. Y119 serves as the catalytic O-(5'-phospho-DNA)-tyrosine intermediate. Mg(2+) is bound by residues E202 and D255.

This sequence belongs to the TOP6A family. Requires Mg(2+) as cofactor.

The protein localises to the nucleus. The enzyme catalyses ATP-dependent breakage, passage and rejoining of double-stranded DNA.. Required for meiotic recombination. Mediates DNA cleavage that forms the double-strand breaks (DSB) that initiate meiotic recombination. The protein is Meiotic recombination protein spo-11 (spo-11) of Caenorhabditis elegans.